The chain runs to 429 residues: Large ribosomal subunit protein mL37 (429 aa).

The N-terminal 29 residues, 1–29 (MALRPVVLRRAPAHSRGILTRPGPPRPRG), are a transit peptide targeting the mitochondrion. The interval 12 to 45 (PAHSRGILTRPGPPRPRGPLPRTPWTTRGPPPDQ) is disordered. Residues 22–33 (PGPPRPRGPLPR) show a composition bias toward pro residues.

Belongs to the mitochondrion-specific ribosomal protein mL37 family. As to quaternary structure, component of the mitochondrial ribosome large subunit (39S) which comprises a 16S rRNA and about 50 distinct proteins.

Its subcellular location is the mitochondrion. This chain is Large ribosomal subunit protein mL37 (MRPL37), found in Gallus gallus (Chicken).